We begin with the raw amino-acid sequence, 362 residues long: Mitochondrial distribution and morphology protein 12 (362 aa).

One can recognise an SMP-LTD domain in the interval 1 to 361; sequence MSFDINWSQL…WPSWLCFDMS (361 aa). Disordered stretches follow at residues 65-141 and 170-207; these read DFYE…AATP and TPSG…SKRG. Composition is skewed to polar residues over residues 106 to 119 and 170 to 187; these read VTLS…TQFA and TPSG…MRTG. Low complexity predominate over residues 192–201; sequence PISNTPISSS.

This sequence belongs to the MDM12 family. In terms of assembly, component of the ER-mitochondria encounter structure (ERMES) or MDM complex, composed of MMM1, MDM10, MDM12 and MDM34. An MMM1 homodimer associates with one molecule of MDM12 on each side in a pairwise head-to-tail manner, and the SMP-LTD domains of MMM1 and MDM12 generate a continuous hydrophobic tunnel for phospholipid trafficking.

It localises to the mitochondrion outer membrane. Its subcellular location is the endoplasmic reticulum membrane. Its function is as follows. Component of the ERMES/MDM complex, which serves as a molecular tether to connect the endoplasmic reticulum (ER) and mitochondria. Components of this complex are involved in the control of mitochondrial shape and protein biogenesis, and function in nonvesicular lipid trafficking between the ER and mitochondria. MDM12 is required for the interaction of the ER-resident membrane protein MMM1 and the outer mitochondrial membrane-resident beta-barrel protein MDM10. The MDM12-MMM1 subcomplex functions in the major beta-barrel assembly pathway that is responsible for biogenesis of all mitochondrial outer membrane beta-barrel proteins, and acts in a late step after the SAM complex. The MDM10-MDM12-MMM1 subcomplex further acts in the TOM40-specific pathway after the action of the MDM12-MMM1 complex. Essential for establishing and maintaining the structure of mitochondria and maintenance of mtDNA nucleoids. In Meyerozyma guilliermondii (strain ATCC 6260 / CBS 566 / DSM 6381 / JCM 1539 / NBRC 10279 / NRRL Y-324) (Yeast), this protein is Mitochondrial distribution and morphology protein 12.